The primary structure comprises 155 residues: MSKIILDLQVACDHRCNLPSEDLFMYWLYMVLPLFRKKAEVTIRLVDEAESYNLNKIYRGQNHSTNVLSFPFKAPSPVKLVLLGDIIICRQVVEREAQEQNKILEAYWAHMVIHGSLHLLGYDHFIEQNAKKMEYLETKIMHKLGYLNPYETEIS.

His114, His118, and His124 together coordinate Zn(2+).

It belongs to the endoribonuclease YbeY family. Zn(2+) serves as cofactor.

It localises to the cytoplasm. Functionally, single strand-specific metallo-endoribonuclease involved in late-stage 70S ribosome quality control and in maturation of the 3' terminus of the 16S rRNA. This chain is Endoribonuclease YbeY, found in Baumannia cicadellinicola subsp. Homalodisca coagulata.